We begin with the raw amino-acid sequence, 83 residues long: NAD(P)H-quinone oxidoreductase subunit L (83 aa).

The next 2 helical transmembrane spans lie at Ile-18 to Phe-38 and Phe-53 to Leu-73.

The protein belongs to the complex I NdhL subunit family. NDH-1 can be composed of about 15 different subunits; different subcomplexes with different compositions have been identified which probably have different functions.

Its subcellular location is the cellular thylakoid membrane. The enzyme catalyses a plastoquinone + NADH + (n+1) H(+)(in) = a plastoquinol + NAD(+) + n H(+)(out). The catalysed reaction is a plastoquinone + NADPH + (n+1) H(+)(in) = a plastoquinol + NADP(+) + n H(+)(out). Its function is as follows. NDH-1 shuttles electrons from an unknown electron donor, via FMN and iron-sulfur (Fe-S) centers, to quinones in the respiratory and/or the photosynthetic chain. The immediate electron acceptor for the enzyme in this species is believed to be plastoquinone. Couples the redox reaction to proton translocation, and thus conserves the redox energy in a proton gradient. Cyanobacterial NDH-1 also plays a role in inorganic carbon-concentration. The sequence is that of NAD(P)H-quinone oxidoreductase subunit L from Synechococcus sp. (strain CC9311).